Consider the following 271-residue polypeptide: Formamidopyrimidine-DNA glycosylase (271 aa).

Pro2 serves as the catalytic Schiff-base intermediate with DNA. Glu3 (proton donor) is an active-site residue. Lys58 functions as the Proton donor; for beta-elimination activity in the catalytic mechanism. Residues His91, Arg110, and Arg152 each coordinate DNA. The segment at 237-271 (NVYGRGGKACKKCRKPLTEKKLGQRTTVYCTHCQK) adopts an FPG-type zinc-finger fold. Arg261 acts as the Proton donor; for delta-elimination activity in catalysis.

Belongs to the FPG family. Monomer. Zn(2+) is required as a cofactor.

It carries out the reaction Hydrolysis of DNA containing ring-opened 7-methylguanine residues, releasing 2,6-diamino-4-hydroxy-5-(N-methyl)formamidopyrimidine.. It catalyses the reaction 2'-deoxyribonucleotide-(2'-deoxyribose 5'-phosphate)-2'-deoxyribonucleotide-DNA = a 3'-end 2'-deoxyribonucleotide-(2,3-dehydro-2,3-deoxyribose 5'-phosphate)-DNA + a 5'-end 5'-phospho-2'-deoxyribonucleoside-DNA + H(+). Functionally, involved in base excision repair of DNA damaged by oxidation or by mutagenic agents. Acts as a DNA glycosylase that recognizes and removes damaged bases. Has a preference for oxidized purines, such as 7,8-dihydro-8-oxoguanine (8-oxoG). Has AP (apurinic/apyrimidinic) lyase activity and introduces nicks in the DNA strand. Cleaves the DNA backbone by beta-delta elimination to generate a single-strand break at the site of the removed base with both 3'- and 5'-phosphates. This chain is Formamidopyrimidine-DNA glycosylase, found in Saccharophagus degradans (strain 2-40 / ATCC 43961 / DSM 17024).